The sequence spans 121 residues: Secretin (121 aa).

The signal sequence occupies residues 1–18 (MAPRPLLLLLLLLGGSAA). Positions 19–26 (RPAPPRAR) are excised as a propeptide. Val-54 carries the post-translational modification Valine amide. Phosphoserine is present on Ser-58. Residues 58-121 (SEQDAENSMA…AAAEGTLRPR (64 aa)) constitute a propeptide that is removed on maturation.

Belongs to the glucagon family.

The protein localises to the secreted. Functionally, hormone involved in different processes, such as regulation of the pH of the duodenal content, food intake and water homeostasis. Exerts its biological effects by binding to secretin receptor (SCTR), a G-protein coupled receptor expressed in the basolateral domain of several cells. Acts as a key gastrointestinal hormone by regulating the pH of the duodenal content. Secreted by S cells of the duodenum in the crypts of Lieberkuehn and regulates the pH of the duodenum by (1) inhibiting the secretion of gastric acid from the parietal cells of the stomach and (2) stimulating the production of bicarbonate (NaHCO(3)) from the ductal cells of the pancreas. Production of bicarbonate is essential to neutralize the pH and ensure no damage is done to the small intestine by the gastric acid. In addition to regulating the pH of the duodenal content, plays a central role in diet induced thermogenesis: acts as a non-sympathetic brown fat (BAT) activator mediating prandial thermogenesis, which consequentially induces satiation. Mechanistically, secretin released by the gut after a meal binds to secretin receptor (SCTR) in brown adipocytes, activating brown fat thermogenesis by stimulating lipolysis, which is sensed in the brain and promotes satiation. Also able to stimulate lipolysis in white adipocytes. Also plays an important role in cellular osmoregulation: released into the systemic circulation in response to hyperosmolality and acts at different levels in the hypothalamus, pituitary and kidney to regulate water homeostasis. Also plays a role in the central nervous system, possibly by acting as a neuropeptide hormone: required for hippocampal synaptic function and neural progenitor cells maintenance. The chain is Secretin from Homo sapiens (Human).